We begin with the raw amino-acid sequence, 304 residues long: ULP1-interacting protein 4 (304 aa).

Residues 72–269 are disordered; that stretch reads DEYPKEVDEH…SIVKEGDANT (198 aa). Basic and acidic residues predominate over residues 73-83; that stretch reads EYPKEVDEHSN. Positions 129–149 are enriched in polar residues; sequence TPSLKGNVTFPSPKTAISQDG. Ser-140 carries the phosphoserine modification. Residues 155–183 show a composition bias toward basic and acidic residues; sequence ETTRKERKYEHAPLNEVPVERDPKEENKE. A phosphoserine mark is found at Ser-185 and Ser-205.

As to quaternary structure, interacts with ULP1.

The protein localises to the endoplasmic reticulum membrane. Its subcellular location is the mitochondrion outer membrane. It is found in the nucleus envelope. This chain is ULP1-interacting protein 4 (UIP4), found in Saccharomyces cerevisiae (strain ATCC 204508 / S288c) (Baker's yeast).